Here is a 360-residue protein sequence, read N- to C-terminus: Protein pelota homolog (360 aa).

It belongs to the eukaryotic release factor 1 family. Pelota subfamily. As to quaternary structure, monomer. The cofactor is a divalent metal cation.

It is found in the cytoplasm. In terms of biological role, may function in recognizing stalled ribosomes, interact with stem-loop structures in stalled mRNA molecules, and effect endonucleolytic cleavage of the mRNA. May play a role in the release non-functional ribosomes and degradation of damaged mRNAs. Has endoribonuclease activity. The protein is Protein pelota homolog of Hyperthermus butylicus (strain DSM 5456 / JCM 9403 / PLM1-5).